The primary structure comprises 88 residues: Co-chaperonin GroES (88 aa).

Belongs to the GroES chaperonin family. As to quaternary structure, heptamer of 7 subunits arranged in a ring. Interacts with the chaperonin GroEL.

It is found in the cytoplasm. In terms of biological role, together with the chaperonin GroEL, plays an essential role in assisting protein folding. The GroEL-GroES system forms a nano-cage that allows encapsulation of the non-native substrate proteins and provides a physical environment optimized to promote and accelerate protein folding. GroES binds to the apical surface of the GroEL ring, thereby capping the opening of the GroEL channel. The chain is Co-chaperonin GroES from Treponema denticola (strain ATCC 35405 / DSM 14222 / CIP 103919 / JCM 8153 / KCTC 15104).